We begin with the raw amino-acid sequence, 265 residues long: Arcelin-2 (265 aa).

The first 21 residues, 1 to 21 (MASSNLLTLALFLVLLTHANS), serve as a signal peptide directing secretion. Residues Asn33 and Asn89 are each glycosylated (N-linked (GlcNAc...) asparagine). Cys165 and Cys201 are disulfide-bonded.

Belongs to the leguminous lectin family.

Functionally, seed storage. This carbohydrate-binding lectin has toxic effects on bean bruchid pests. Antibiosis properties of legume lectins are proposed to be due to the lysis of epithelial cells of the intestine by binding to the carbohydrate moieties of these proteins. This is Arcelin-2 (ARC2) from Phaseolus vulgaris (Kidney bean).